The sequence spans 534 residues: Alkaline serine exoprotease A (534 aa).

A signal peptide spans 1–21 (MLKKLLSCCITSALCFHSSLA). A propeptide spanning residues 22 to 141 (FSQPNEIADS…LSLDPIVSAD (120 aa)) is cleaved from the precursor. The region spanning 57-134 (RYIVVFQQPQ…YIEQDRILSL (78 aa)) is the Inhibitor I9 domain. The Peptidase S8 domain occupies 148–419 (IWGLDRIDQR…KLLYSLTDAD (272 aa)). Active-site charge relay system residues include D180, H213, and S363. Residues 423–442 (DCGGPDPTPDPEGKLTSGVP) form a disordered region.

The protein belongs to the peptidase S8 family.

In Vibrio alginolyticus, this protein is Alkaline serine exoprotease A (proA).